The following is a 101-amino-acid chain: MTSPAAPAATPVADKLPETLTEPNLPWMCICWDDPVNLMSYVTYVFQTVLGYSRKRATELMMQVHTEGKAVVSSGERDKVEGDVKKLQTAGLWATMQRADG.

Belongs to the ClpS family. Binds to the N-terminal domain of the chaperone ClpA.

Involved in the modulation of the specificity of the ClpAP-mediated ATP-dependent protein degradation. This Corynebacterium jeikeium (strain K411) protein is ATP-dependent Clp protease adapter protein ClpS.